We begin with the raw amino-acid sequence, 244 residues long: Lactate utilization protein A (244 aa).

Belongs to the LutA/YkgE family.

Functionally, is involved in L-lactate degradation and allows cells to grow with lactate as the sole carbon source. The protein is Lactate utilization protein A of Oceanobacillus iheyensis (strain DSM 14371 / CIP 107618 / JCM 11309 / KCTC 3954 / HTE831).